Reading from the N-terminus, the 86-residue chain is Cyclin-dependent kinase inhibitor 6 (86 aa).

The segment covering 1–15 (MAAAAATVTAVQPAA) has biased composition (low complexity). The tract at residues 1–23 (MAAAAATVTAVQPAASSCGKRDG) is disordered.

This sequence belongs to the CDI family. ICK/KRP subfamily.

This chain is Cyclin-dependent kinase inhibitor 6 (KRP6), found in Oryza sativa subsp. japonica (Rice).